A 476-amino-acid chain; its full sequence is Lactate utilization protein B (476 aa).

2 consecutive 4Fe-4S ferredoxin-type domains span residues 304 to 334 (GTEF…GHSY) and 353 to 382 (YDDY…LHEL). Positions 313, 316, 319, 323, 366, 369, and 373 each coordinate [4Fe-4S] cluster.

Belongs to the LutB/YkgF family.

Functionally, is involved in L-lactate degradation and allows cells to grow with lactate as the sole carbon source. Has probably a role as an electron transporter during oxidation of L-lactate. The sequence is that of Lactate utilization protein B from Geobacillus thermodenitrificans (strain NG80-2).